The following is a 789-amino-acid chain: Zinc finger FYVE domain-containing protein 1 (789 aa).

The segment at 416 to 788 is required for localization in the lipid droplets; it reads MAHSSFFPDE…LSVMTGKGPL (373 aa). FYVE-type zinc fingers lie at residues 598 to 659 and 715 to 775; these read NSQI…EARN and DHEI…KKPA. Positions 604, 607, 620, 623, 628, 631, 651, 654, 721, 724, 737, 740, 745, 748, 767, and 770 each coordinate Zn(2+).

As to quaternary structure, interacts with RAB18 (in GTP-bound form). Interacts with BSCL2 in a RAB18-dependent manner. Interacts with ZW10.

Its subcellular location is the golgi apparatus. It localises to the golgi stack. The protein resides in the endoplasmic reticulum. The protein localises to the preautophagosomal structure. It is found in the lipid droplet. Its subcellular location is the mitochondrion. Its function is as follows. Plays a role in the formation of lipid droplets (LDs) which are storage organelles at the center of lipid and energy homeostasis. Regulates the morphology, size and distribution of LDs. Mediates the formation of endoplasmic reticulum-lipid droplets (ER-LD) contact sites by forming a complex with RAB18 and ZW10. Binds to phosphatidylinositol 3-phosphate (PtdIns3P) through FYVE-type zinc finger. The polypeptide is Zinc finger FYVE domain-containing protein 1 (ZFYVE1) (Pongo abelii (Sumatran orangutan)).